The primary structure comprises 134 residues: Small ribosomal subunit protein uS11 (134 aa).

2 disordered regions span residues 1 to 22 and 114 to 134; these read MPPK…KNVA and SIQD…RRRV. A compositionally biased stretch (basic residues) spans 9 to 22; the sequence is AAKKVRRKEKKNVA.

The protein belongs to the universal ribosomal protein uS11 family. Part of the 30S ribosomal subunit. Interacts with proteins S7 and S18. Binds to IF-3.

Functionally, located on the platform of the 30S subunit, it bridges several disparate RNA helices of the 16S rRNA. Forms part of the Shine-Dalgarno cleft in the 70S ribosome. This chain is Small ribosomal subunit protein uS11, found in Streptomyces avermitilis (strain ATCC 31267 / DSM 46492 / JCM 5070 / NBRC 14893 / NCIMB 12804 / NRRL 8165 / MA-4680).